Consider the following 207-residue polypeptide: Urease accessory protein UreG (207 aa).

16–23 (GPVGSGKT) contacts GTP.

Belongs to the SIMIBI class G3E GTPase family. UreG subfamily. In terms of assembly, homodimer. UreD, UreF and UreG form a complex that acts as a GTP-hydrolysis-dependent molecular chaperone, activating the urease apoprotein by helping to assemble the nickel containing metallocenter of UreC. The UreE protein probably delivers the nickel.

The protein localises to the cytoplasm. Its function is as follows. Facilitates the functional incorporation of the urease nickel metallocenter. This process requires GTP hydrolysis, probably effectuated by UreG. The chain is Urease accessory protein UreG from Shewanella halifaxensis (strain HAW-EB4).